Reading from the N-terminus, the 687-residue chain is Phenylalanine aminomutase (L-beta-phenylalanine forming) (687 aa).

The Proton donor/acceptor role is filled by tyrosine 80. A cross-link (5-imidazolinone (Ala-Gly)) is located at residues 175–177 (ASG). A 2,3-didehydroalanine (Ser) modification is found at serine 176. Positions 231, 319, 325, 355, 427, 455, and 458 each coordinate (E)-cinnamate.

Belongs to the PAL/histidase family. As to quaternary structure, homodimer. Homotetramer, dimer of dimers. In terms of processing, contains an active site 4-methylidene-imidazol-5-one (MIO), which is formed autocatalytically by cyclization and dehydration of residues Ala-Ser-Gly.

The protein localises to the cytoplasm. It carries out the reaction L-phenylalanine = L-beta-phenylalanine. The enzyme catalyses L-phenylalanine = (E)-cinnamate + NH4(+). It functions in the pathway alkaloid biosynthesis; taxol biosynthesis. Its pathway is phenylpropanoid metabolism; trans-cinnamate biosynthesis; trans-cinnamate from L-phenylalanine: step 1/1. Functionally, phenylalanine aminomutase that catalyzes the rearrangement of L-phenylalanine to R-beta-phenylalanine. Catalyzes the first committed step in the biosynthesis of the side chain of the alkaloid taxol (paclitaxel), a widely-used compound with antitumor activity. Also has low phenylalanine ammonia-lyase activity and can catalyze the amination of trans-cinnamate. In Taxus chinensis (Chinese yew), this protein is Phenylalanine aminomutase (L-beta-phenylalanine forming) (pam).